The chain runs to 341 residues: 4-hydroxy-2-oxovalerate aldolase (341 aa).

Residues 5–257 (ITLHDMTLRD…ETGVDVFRIA (253 aa)) enclose the Pyruvate carboxyltransferase domain. Position 13 to 14 (13 to 14 (RD)) interacts with substrate. Asp14 is a binding site for Mn(2+). The Proton acceptor role is filled by His17. Substrate is bound by residues Ser167 and His196. Positions 196 and 198 each coordinate Mn(2+). Tyr287 provides a ligand contact to substrate.

The protein belongs to the 4-hydroxy-2-oxovalerate aldolase family.

The catalysed reaction is (S)-4-hydroxy-2-oxopentanoate = acetaldehyde + pyruvate. The polypeptide is 4-hydroxy-2-oxovalerate aldolase (mhpE) (Cupriavidus taiwanensis (strain DSM 17343 / BCRC 17206 / CCUG 44338 / CIP 107171 / LMG 19424 / R1) (Ralstonia taiwanensis (strain LMG 19424))).